The following is a 207-amino-acid chain: MPRYYCDYCDTYLTHDSPSVRKQHNAGYKHKANVRIYYQQFEEQQTQSLIDQRIKEHLGQTGGYQQVGAVFNQHMLARPRPPMMLPPGSMPMGMRPPVLPRPMMPPQGYMPPPGVPQMMAPPGAPLPPPPQNGILRPPGMAPIPGQGGGPPGMAPIPGQGGGPPPNYNGLPPPPPYHTNPAAPPSGNFNNPNLNNPNPSAESPESNE.

Residues Y4–I36 form a Matrin-type zinc finger. Pro residues-rich tracts occupy residues P105–V115 and P122–Q131. A disordered region spans residues P105–E207. Positions N132–P144 are enriched in low complexity. Positions G162–P183 are enriched in pro residues. The span at P184–E207 shows a compositional bias: low complexity.

This sequence belongs to the U1 small nuclear ribonucleoprotein C family. U1 snRNP is composed of the 7 core Sm proteins B/B', D1, D2, D3, E, F and G that assemble in a heptameric protein ring on the Sm site of the small nuclear RNA to form the core snRNP, and at least 3 U1 snRNP-specific proteins U1-70K, U1-A and U1-C. U1-C interacts with U1 snRNA and the 5' splice-site region of the pre-mRNA.

It is found in the nucleus. Functionally, component of the spliceosomal U1 snRNP, which is essential for recognition of the pre-mRNA 5' splice-site and the subsequent assembly of the spliceosome. U1-C is directly involved in initial 5' splice-site recognition for both constitutive and regulated alternative splicing. The interaction with the 5' splice-site seems to precede base-pairing between the pre-mRNA and the U1 snRNA. Stimulates commitment or early (E) complex formation by stabilizing the base pairing of the 5' end of the U1 snRNA and the 5' splice-site region. This is U1 small nuclear ribonucleoprotein C from Arabidopsis thaliana (Mouse-ear cress).